A 223-amino-acid polypeptide reads, in one-letter code: Ribosome assembly factor mrt4 (223 aa).

It belongs to the universal ribosomal protein uL10 family. Associates with the pre-60S ribosomal particle.

It is found in the nucleus. The protein resides in the nucleolus. It localises to the cytoplasm. Component of the ribosome assembly machinery. Nuclear paralog of the ribosomal protein P0, it binds pre-60S subunits at an early stage of assembly in the nucleolus, and is replaced by P0 in cytoplasmic pre-60S subunits and mature 80S ribosomes. The polypeptide is Ribosome assembly factor mrt4 (Dictyostelium discoideum (Social amoeba)).